The following is a 97-amino-acid chain: Small ribosomal subunit protein bS20 (97 aa).

The interval 1–22 (MANSKSALKRIRTSERNRLRNK) is disordered.

Belongs to the bacterial ribosomal protein bS20 family.

Functionally, binds directly to 16S ribosomal RNA. The sequence is that of Small ribosomal subunit protein bS20 from Crocosphaera subtropica (strain ATCC 51142 / BH68) (Cyanothece sp. (strain ATCC 51142)).